Consider the following 577-residue polypeptide: Arginine--tRNA ligase (577 aa).

A 'HIGH' region motif is present at residues 122–132; that stretch reads PNVAKEMHVGH.

The protein belongs to the class-I aminoacyl-tRNA synthetase family. Monomer.

The protein localises to the cytoplasm. The catalysed reaction is tRNA(Arg) + L-arginine + ATP = L-arginyl-tRNA(Arg) + AMP + diphosphate. The sequence is that of Arginine--tRNA ligase from Aliivibrio fischeri (strain MJ11) (Vibrio fischeri).